The sequence spans 553 residues: ATP synthase F(1) complex subunit alpha, mitochondrial (553 aa).

The transit peptide at 1 to 43 (MLSVRVAAAVARALPRRAGLVSKNALGSSFVAARNLHASNTRL) directs the protein to the mitochondrion. Phosphoserine occurs at positions 53 and 65. Ser76 is modified (phosphoserine; alternate). Ser76 carries an O-linked (GlcNAc) serine; alternate glycan. A Phosphoserine modification is found at Ser106. Lys123, Lys126, and Lys132 each carry N6-acetyllysine. Thr134 carries the phosphothreonine modification. At Lys161 the chain carries N6-acetyllysine; alternate. Lys161 bears the N6-succinyllysine; alternate mark. Ser166 is subject to Phosphoserine. An N6-acetyllysine; alternate modification is found at Lys167. Lys167 is modified (N6-succinyllysine; alternate). At Ser184 the chain carries Phosphoserine. Omega-N-methylarginine is present on Arg204. Residues Gln215, Gly217, Lys218, Thr219, and Ser220 each contribute to the ATP site. Thr219 serves as a coordination point for Mg(2+). 2 positions are modified to N6-acetyllysine; alternate: Lys230 and Lys239. 2 positions are modified to N6-succinyllysine; alternate: Lys230 and Lys239. Lys240 carries the N6-acetyllysine modification. N6-acetyllysine; alternate occurs at positions 261 and 305. An N6-succinyllysine; alternate mark is found at Lys261 and Lys305. Asp312 serves as a coordination point for Mg(2+). Position 427 is an N6-acetyllysine; alternate (Lys427). The residue at position 427 (Lys427) is an N6-succinyllysine; alternate. N6-acetyllysine is present on Lys434. ATP-binding residues include Gln473 and Gln475. N6-acetyllysine; alternate occurs at positions 498, 506, 531, and 539. N6-succinyllysine; alternate is present on residues Lys498, Lys506, Lys531, and Lys539. Lys541 is subject to N6-acetyllysine.

The protein belongs to the ATPase alpha/beta chains family. As to quaternary structure, homotrimer. Component of the ATP synthase complex composed at least of ATP5F1A/subunit alpha, ATP5F1B/subunit beta, ATP5MC1/subunit c (homooctomer), MT-ATP6/subunit a, MT-ATP8/subunit 8, ATP5ME/subunit e, ATP5MF/subunit f, ATP5MG/subunit g, ATP5MK/subunit k, ATP5MJ/subunit j, ATP5F1C/subunit gamma, ATP5F1D/subunit delta, ATP5F1E/subunit epsilon, ATP5PF/subunit F6, ATP5PB/subunit b, ATP5PD/subunit d, ATP5PO/subunit OSCP. ATP synthase complex consists of a soluble F(1) head domain (subunits alpha(3) and beta(3)) - the catalytic core - and a membrane F(0) domain - the membrane proton channel (subunits c, a, 8, e, f, g, k and j). These two domains are linked by a central stalk (subunits gamma, delta, and epsilon) rotating inside the F1 region and a stationary peripheral stalk (subunits F6, b, d, and OSCP). Interacts with ATPAF2. Interacts with HRG; the interaction occurs on the surface of T-cells and alters the cell morphology when associated with concanavalin (in vitro). Interacts with PLG (angiostatin peptide); the interaction inhibits most of the angiogenic properties of angiostatin. Interacts with BLOC1S1. Interacts with BCL2L1 isoform BCL-X(L); the interaction mediates the association of BCL2L1 isoform BCL-X(L) with the mitochondrial membrane F(1)F(0) ATP synthase and enhances neurons metabolic efficiency. Interacts with CLN5 and PPT1. Interacts with S100A1; this interaction increases F1-ATPase activity. Interacts with ABCB7; this interaction allows the regulation of cellular iron homeostasis and cellular reactive oxygen species (ROS) levels in cardiomyocytes. Post-translationally, acetylated on lysine residues. BLOC1S1 is required for acetylation. As to expression, expressed in heart (at protein level).

The protein resides in the mitochondrion. It is found in the mitochondrion inner membrane. It localises to the cell membrane. In terms of biological role, subunit alpha, of the mitochondrial membrane ATP synthase complex (F(1)F(0) ATP synthase or Complex V) that produces ATP from ADP in the presence of a proton gradient across the membrane which is generated by electron transport complexes of the respiratory chain. ATP synthase complex consist of a soluble F(1) head domain - the catalytic core - and a membrane F(1) domain - the membrane proton channel. These two domains are linked by a central stalk rotating inside the F(1) region and a stationary peripheral stalk. During catalysis, ATP synthesis in the catalytic domain of F(1) is coupled via a rotary mechanism of the central stalk subunits to proton translocation. In vivo, can only synthesize ATP although its ATP hydrolase activity can be activated artificially in vitro. With the catalytic subunit beta (ATP5F1B), forms the catalytic core in the F(1) domain. Subunit alpha does not bear the catalytic high-affinity ATP-binding sites. The sequence is that of ATP synthase F(1) complex subunit alpha, mitochondrial from Sus scrofa (Pig).